A 351-amino-acid chain; its full sequence is Phosphoribosylformylglycinamidine cyclo-ligase (351 aa).

It belongs to the AIR synthase family.

The protein resides in the cytoplasm. The enzyme catalyses 2-formamido-N(1)-(5-O-phospho-beta-D-ribosyl)acetamidine + ATP = 5-amino-1-(5-phospho-beta-D-ribosyl)imidazole + ADP + phosphate + H(+). It functions in the pathway purine metabolism; IMP biosynthesis via de novo pathway; 5-amino-1-(5-phospho-D-ribosyl)imidazole from N(2)-formyl-N(1)-(5-phospho-D-ribosyl)glycinamide: step 2/2. This chain is Phosphoribosylformylglycinamidine cyclo-ligase, found in Idiomarina loihiensis (strain ATCC BAA-735 / DSM 15497 / L2-TR).